The sequence spans 39 residues: Pro-opiomelanocortin (39 aa).

Position 13 is a valine amide (V13).

Belongs to the POMC family.

It is found in the secreted. In terms of biological role, precursor protein for pituitary hormones that regulate stress and environmental adaptation. Stimulates the adrenal glands to release cortisol. Its function is as follows. Anorexigenic peptide. Increases the pigmentation of skin by increasing melanin production in melanocytes. The chain is Pro-opiomelanocortin (POMC) from Struthio camelus (Common ostrich).